The primary structure comprises 91 residues: Alpha-elapitoxin-Oh2b (91 aa).

The signal sequence occupies residues 1–21 (MKTLLLTLVVMTIVCLDLGYT). 5 disulfides stabilise this stretch: cysteine 24/cysteine 41, cysteine 34/cysteine 62, cysteine 47/cysteine 51, cysteine 66/cysteine 77, and cysteine 78/cysteine 83.

The protein belongs to the three-finger toxin family. Long-chain subfamily. Type II alpha-neurotoxin sub-subfamily. As to quaternary structure, monomer. As to expression, expressed by the venom gland.

It localises to the secreted. Its function is as follows. Binds with high affinity to muscular (alpha-1/CHRNA1) and neuronal (alpha-7/CHRNA7) nicotinic acetylcholine receptor (nAChR) and inhibits acetylcholine from binding to the receptor, thereby impairing neuromuscular and neuronal transmission. Recombinant LNTX1 leads to a functional block of the muscle-type acetylcholine receptors. Has a cytotoxic activity. This neurotoxin is lethal. The protein is Alpha-elapitoxin-Oh2b of Ophiophagus hannah (King cobra).